Here is a 142-residue protein sequence, read N- to C-terminus: Neuritin (142 aa).

The first 27 residues, 1–27, serve as a signal peptide directing secretion; it reads MGLKLNGRYISLILAVQIAYLVQAVRA. The GPI-anchor amidated glycine moiety is linked to residue Gly-116. The propeptide at 117-142 is removed in mature form; sequence AAGPLLPALPVLLVSLSAALATWLSF.

It belongs to the neuritin family. Component of the outer core of AMPAR complex. AMPAR complex consists of an inner core made of 4 pore-forming GluA/GRIA proteins (GRIA1, GRIA2, GRIA3 and GRIA4) and 4 major auxiliary subunits arranged in a twofold symmetry. One of the two pairs of distinct binding sites is occupied either by CNIH2, CNIH3 or CACNG2, CACNG3. The other harbors CACNG2, CACNG3, CACNG4, CACNG8 or GSG1L. This inner core of AMPAR complex is complemented by outer core constituents binding directly to the GluA/GRIA proteins at sites distinct from the interaction sites of the inner core constituents. Outer core constituents include at least PRRT1, PRRT2, CKAMP44/SHISA9, FRRS1L and NRN1. The proteins of the inner and outer core serve as a platform for other, more peripherally associated AMPAR constituents. Alone or in combination, these auxiliary subunits control the gating and pharmacology of the AMPAR complex and profoundly impact their biogenesis and protein processing.

The protein resides in the cell membrane. The protein localises to the synapse. Promotes neurite outgrowth and especially branching of neuritic processes in primary hippocampal and cortical cells. The protein is Neuritin (NRN1) of Bos taurus (Bovine).